An 82-amino-acid polypeptide reads, in one-letter code: ATP synthase subunit c, chloroplastic (82 aa).

Helical transmembrane passes span 7 to 27 (AASVIAAGLAVGLAAIGPGIG) and 57 to 77 (LAFMESLTIYGLVVALSLLFA).

Belongs to the ATPase C chain family. As to quaternary structure, F-type ATPases have 2 components, F(1) - the catalytic core - and F(0) - the membrane proton channel. F(1) has five subunits: alpha(3), beta(3), gamma(1), delta(1), epsilon(1). F(0) has four main subunits: a(1), b(1), b'(1) and c(10-14). The alpha and beta chains form an alternating ring which encloses part of the gamma chain. F(1) is attached to F(0) by a central stalk formed by the gamma and epsilon chains, while a peripheral stalk is formed by the delta, b and b' chains.

The protein resides in the plastid. The protein localises to the chloroplast thylakoid membrane. In terms of biological role, f(1)F(0) ATP synthase produces ATP from ADP in the presence of a proton or sodium gradient. F-type ATPases consist of two structural domains, F(1) containing the extramembraneous catalytic core and F(0) containing the membrane proton channel, linked together by a central stalk and a peripheral stalk. During catalysis, ATP synthesis in the catalytic domain of F(1) is coupled via a rotary mechanism of the central stalk subunits to proton translocation. Its function is as follows. Key component of the F(0) channel; it plays a direct role in translocation across the membrane. A homomeric c-ring of between 10-14 subunits forms the central stalk rotor element with the F(1) delta and epsilon subunits. This is ATP synthase subunit c, chloroplastic from Porphyra purpurea (Red seaweed).